The sequence spans 425 residues: Protein cab-1 (425 aa).

Positions 1–11 (MRYTFSDEKKA) are enriched in basic and acidic residues. Disordered regions lie at residues 1–20 (MRYT…SRAK) and 214–251 (LKKT…VPQK). The segment at 205–424 (ENEIAKESEL…EVCNPNFAAQ (220 aa)) is AEX-3-binding. Residues 300–320 (LLLLAVGTVMCVGLIGTVAGG) traverse the membrane as a helical segment. The segment at 334–355 (DDGEYAPYAGTGPGFRKNKGNK) is disordered.

It belongs to the NPDC1/cab-1 family. Binds to the RAB3 GDP/GTP exchange factor aex-3. As to expression, expressed in a variety of neurons.

It localises to the membrane. The protein is Protein cab-1 (cab-1) of Caenorhabditis elegans.